Reading from the N-terminus, the 57-residue chain is Large ribosomal subunit protein bL32 (57 aa).

Positions 1–20 (MAVPKKKTSKGKRNQRHAVW) are enriched in basic residues. The disordered stretch occupies residues 1 to 23 (MAVPKKKTSKGKRNQRHAVWKAK).

The protein belongs to the bacterial ribosomal protein bL32 family.

The chain is Large ribosomal subunit protein bL32 from Prochlorococcus marinus (strain SARG / CCMP1375 / SS120).